A 171-amino-acid polypeptide reads, in one-letter code: Allophycocyanin subunit beta-18 (171 aa).

Position 72 is an N4-methylasparagine (asparagine 72). Residue cysteine 82 coordinates (2R,3E)-phycocyanobilin.

Belongs to the phycobiliprotein family. In terms of assembly, heterodimer of an alpha and a beta chain. In terms of processing, contains one covalently linked bilin chromophore.

It is found in the plastid. It localises to the chloroplast thylakoid membrane. Its function is as follows. Light-harvesting photosynthetic bile pigment-protein from the phycobiliprotein complex. Allophycocyanin has a maximum absorption at approximately 650 nanometers. The sequence is that of Allophycocyanin subunit beta-18 (apcF) from Aglaothamnion neglectum (Red alga).